A 255-amino-acid chain; its full sequence is Putative OPA3-like protein CG13603 (255 aa).

Positions 108 to 154 (KENKKNELAQSEKMELTNMLTEMNFRLERQDAQIREMTRVLADLDSR) form a coiled coil. The tract at residues 168-187 (VPFDPDTPDQSASARNPKKF) is disordered. Residues 212–241 (DGRNRKAKEALQHLDEVAVQLEQSLGEAAT) adopt a coiled-coil conformation.

The protein belongs to the OPA3 family.

This Drosophila melanogaster (Fruit fly) protein is Putative OPA3-like protein CG13603.